The primary structure comprises 280 residues: Small ribosomal subunit protein uS3 (280 aa).

Positions 38-106 (IRRLLSTGLE…QVQLNILEVR (69 aa)) constitute a KH type-2 domain. A disordered region spans residues 215-280 (AAAAPAGAER…PAAEPQSTES (66 aa)). The span at 238–280 (SGASGTTATGTEAGRAAASADESTAAGQPAEAAPAAEPQSTES) shows a compositional bias: low complexity.

Belongs to the universal ribosomal protein uS3 family. In terms of assembly, part of the 30S ribosomal subunit. Forms a tight complex with proteins S10 and S14.

Its function is as follows. Binds the lower part of the 30S subunit head. Binds mRNA in the 70S ribosome, positioning it for translation. In Mycobacterium avium (strain 104), this protein is Small ribosomal subunit protein uS3.